The following is a 295-amino-acid chain: ATP-dependent (S)-NAD(P)H-hydrate dehydratase (295 aa).

The YjeF C-terminal domain maps to 9–289 (LLERARNLVP…DQIHQVFDDL (281 aa)). Residues G109 and 162–168 (NAIEFCR) contribute to the (6S)-NADPHX site. ATP contacts are provided by residues 193 to 197 (KGLND) and 214 to 223 (GSGRRCGGQG). Position 224 (D224) interacts with (6S)-NADPHX.

Belongs to the NnrD/CARKD family. Requires Mg(2+) as cofactor.

It catalyses the reaction (6S)-NADHX + ATP = ADP + phosphate + NADH + H(+). It carries out the reaction (6S)-NADPHX + ATP = ADP + phosphate + NADPH + H(+). In terms of biological role, catalyzes the dehydration of the S-form of NAD(P)HX at the expense of ATP, which is converted to ADP. Together with NAD(P)HX epimerase, which catalyzes the epimerization of the S- and R-forms, the enzyme allows the repair of both epimers of NAD(P)HX, a damaged form of NAD(P)H that is a result of enzymatic or heat-dependent hydration. This chain is ATP-dependent (S)-NAD(P)H-hydrate dehydratase, found in Anopheles darlingi (Mosquito).